A 216-amino-acid chain; its full sequence is Somatotropin (216 aa).

Residues 1 to 26 (MAAGPRTSVLLAFGLLCLPWPQDVGA) form the signal peptide. Residue His45 participates in Zn(2+) binding. An intrachain disulfide couples Cys78 to Cys189. Ser131 is subject to Phosphoserine. Residue Glu198 participates in Zn(2+) binding. A disulfide bridge connects residues Cys206 and Cys214.

It belongs to the somatotropin/prolactin family.

The protein resides in the secreted. Its function is as follows. Plays an important role in growth control. Its major role in stimulating body growth is to stimulate the liver and other tissues to secrete IGF1. It stimulates both the differentiation and proliferation of myoblasts. It also stimulates amino acid uptake and protein synthesis in muscle and other tissues. This Equus caballus (Horse) protein is Somatotropin (GH1).